The sequence spans 102 residues: uncharacterized protein (102 aa).

Low complexity predominate over residues 1 to 13; the sequence is PSSSQALSVPSLS. Residues 1-24 form a disordered region; sequence PSSSQALSVPSLSSEKKTASPTCV.

This is an uncharacterized protein from Human cytomegalovirus (strain AD169) (HHV-5).